The primary structure comprises 243 residues: MSKTHFGFESVEETEKAKKVAGVFHSVASNYDLMNDLMSAGMHRAWKAFTIAQANVRPGFKVLDIAAGTGDLTKSFAKAAGPTGEVWHTDINESMLRVGRDRLLDKGIVTPSLLCDAEKIPFPDNYFDVVTVAFGLRNMTHKDAALAEMRRVTKPGGRVMVLEFSKVWDPLKKAYDLYSFKVLPWLGDKFAKDAESYRYLAESIRMHPDQDTLKTMMEQAGLDAVKYYNLSGGVVALHLGTKY.

Residues Thr69, Asp90, and 116–117 (DA) each bind S-adenosyl-L-methionine.

The protein belongs to the class I-like SAM-binding methyltransferase superfamily. MenG/UbiE family.

It carries out the reaction a 2-demethylmenaquinol + S-adenosyl-L-methionine = a menaquinol + S-adenosyl-L-homocysteine + H(+). It catalyses the reaction a 2-methoxy-6-(all-trans-polyprenyl)benzene-1,4-diol + S-adenosyl-L-methionine = a 5-methoxy-2-methyl-3-(all-trans-polyprenyl)benzene-1,4-diol + S-adenosyl-L-homocysteine + H(+). Its pathway is quinol/quinone metabolism; menaquinone biosynthesis; menaquinol from 1,4-dihydroxy-2-naphthoate: step 2/2. It participates in cofactor biosynthesis; ubiquinone biosynthesis. Its function is as follows. Methyltransferase required for the conversion of demethylmenaquinol (DMKH2) to menaquinol (MKH2) and the conversion of 2-polyprenyl-6-methoxy-1,4-benzoquinol (DDMQH2) to 2-polyprenyl-3-methyl-6-methoxy-1,4-benzoquinol (DMQH2). The polypeptide is Ubiquinone/menaquinone biosynthesis C-methyltransferase UbiE (Burkholderia ambifaria (strain MC40-6)).